The primary structure comprises 285 residues: Phosphatase YwpJ (285 aa).

Catalysis depends on D7, which acts as the Nucleophile. Position 7 (D7) interacts with Mg(2+). L8 is a binding site for phosphate. A Mg(2+)-binding site is contributed by D9. Residues 41-42 (TG) and K214 contribute to the phosphate site. Mg(2+) contacts are provided by D237 and S238. Phosphate is bound by residues N240 and 282–283 (KH).

It belongs to the HAD-like hydrolase superfamily. Cof family. Mg(2+) serves as cofactor.

In terms of biological role, catalyzes the dephosphorylation of phosphorylated 5-6 carbon sugars and monophosphate nucleotides (NMP) in vitro. To a lesser extent, dephosphorylates flavin mononucleotide (FMN) in vitro. The polypeptide is Phosphatase YwpJ (ywpJ) (Bacillus subtilis (strain 168)).